A 306-amino-acid polypeptide reads, in one-letter code: Ubiquitin carboxyl-terminal hydrolase RPN11 (306 aa).

Residue Met1 is modified to N-acetylmethionine. Residues 1-20 form a disordered region; that stretch reads MERLQRLMMNSKVGSADTGR. Residues 27 to 162 form the MPN domain; the sequence is VYISSIALLK…IDAFRLIDTG (136 aa). His109, His111, and Asp122 together coordinate Zn(2+). The JAMM motif signature appears at 109–122; sequence HSHPGFGCWLSSVD.

The protein belongs to the peptidase M67A family. Component of the lid subcomplex of the 19S proteasome regulatory particle complex (also named PA700 complex). The 26S proteasome consists of a 20S proteasome core and two 19S regulatory subunits. Interacts directly with RPN8 and STS1. N-acetylated by NAT3.

The catalysed reaction is Thiol-dependent hydrolysis of ester, thioester, amide, peptide and isopeptide bonds formed by the C-terminal Gly of ubiquitin (a 76-residue protein attached to proteins as an intracellular targeting signal).. In terms of biological role, component of the lid subcomplex of the 26S proteasome, a multiprotein complex involved in the ATP-dependent degradation of ubiquitinated proteins. RPN11 is the only catalytically active member of the lid and serves as the essential deubiquitinase of the proteasome. The protein is Ubiquitin carboxyl-terminal hydrolase RPN11 (RPN11) of Saccharomyces cerevisiae (strain ATCC 204508 / S288c) (Baker's yeast).